An 84-amino-acid chain; its full sequence is Protein myomixer (84 aa).

Topologically, residues 1 to 4 (MPTP) are cytoplasmic. Residues 5–25 (LLPLLLRLLLSCLLLPAARLA) form a helical membrane-spanning segment. The Extracellular segment spans residues 26-84 (RQYLLPLLRRLARRLGSQDMREALLGCLLFILSQRHSPDAGEASRVDRLERRERLGPQK). The AxLyCxL motif lies at 48–57 (ALLGCLLFIL). The interval 62–84 (SPDAGEASRVDRLERRERLGPQK) is disordered.

This sequence belongs to the MYMX family. In terms of assembly, interacts with MYMK.

Its subcellular location is the cell membrane. Its function is as follows. Myoblast-specific protein that mediates myoblast fusion, an essential step for the formation of multi-nucleated muscle fibers. Involved in membrane fusion downstream of the lipid mixing step mediated by MYMK. Acts by generating membrane stresses via its extracellular C-terminus, leading to drive fusion pore formation. Acts independently of MYMK. Involved in skeletal muscle regeneration in response to injury by mediating the fusion of satellite cells, a population of muscle stem cells, with injured myofibers. This chain is Protein myomixer, found in Homo sapiens (Human).